The chain runs to 307 residues: Ras-related protein RabR (307 aa).

The span at 1-10 (MTTTTLLSES) shows a compositional bias: polar residues. Residues 1–45 (MTTTTLLSESTNNSNNTNNNTNNNTNNTMNNNNNNNNNNTIGNNN) are disordered. Low complexity predominate over residues 11 to 45 (TNNSNNTNNNTNNNTNNTMNNNNNNNNNNTIGNNN). 61–68 (GDEEVGKG) contributes to the GTP binding site. An Effector region motif is present at residues 83-92 (ENLYNIEVDR). 122-126 (NFHMH) serves as a coordination point for GTP. Residues 175 to 185 (NFNCQSNSRNS) are compositionally biased toward low complexity. Positions 175–223 (NFNCQSNSRNSTNYNRHSVGNHCPNSPQKGEKENNTHSSTAPPAPPPLP) are disordered. Residues 186–202 (TNYNRHSVGNHCPNSPQ) are compositionally biased toward polar residues. 230–233 (NKCD) serves as a coordination point for GTP. Cysteine methyl ester is present on Cys-304. Cys-304 is lipidated: S-geranylgeranyl cysteine. The propeptide at 305 to 307 (NLM) is removed in mature form.

It belongs to the small GTPase superfamily. Rab family.

The protein resides in the cell membrane. This chain is Ras-related protein RabR (rabR), found in Dictyostelium discoideum (Social amoeba).